Reading from the N-terminus, the 332-residue chain is Glycerol-3-phosphate dehydrogenase [NAD(P)+] (332 aa).

NADPH-binding residues include serine 11, phenylalanine 12, lysine 32, and lysine 106. Sn-glycerol 3-phosphate is bound by residues lysine 106, glycine 137, and serine 139. Alanine 141 is an NADPH binding site. Residues lysine 192, aspartate 245, serine 255, arginine 256, and asparagine 257 each contribute to the sn-glycerol 3-phosphate site. Lysine 192 (proton acceptor) is an active-site residue. Arginine 256 provides a ligand contact to NADPH. Valine 280 and glutamate 282 together coordinate NADPH.

The protein belongs to the NAD-dependent glycerol-3-phosphate dehydrogenase family.

The protein resides in the cytoplasm. The catalysed reaction is sn-glycerol 3-phosphate + NAD(+) = dihydroxyacetone phosphate + NADH + H(+). It carries out the reaction sn-glycerol 3-phosphate + NADP(+) = dihydroxyacetone phosphate + NADPH + H(+). It participates in membrane lipid metabolism; glycerophospholipid metabolism. In terms of biological role, catalyzes the reduction of the glycolytic intermediate dihydroxyacetone phosphate (DHAP) to sn-glycerol 3-phosphate (G3P), the key precursor for phospholipid synthesis. The sequence is that of Glycerol-3-phosphate dehydrogenase [NAD(P)+] from Staphylococcus carnosus (strain TM300).